We begin with the raw amino-acid sequence, 113 residues long: Protein S100-A9 (113 aa).

N-acetylalanine is present on Ala-2. 2 consecutive EF-hand domains span residues 13-48 (ITTI…QLAT) and 55-90 (RNEA…LIFA). His-21 is a Zn(2+) binding site. Ser-24 and His-29 together coordinate Ca(2+). Position 31 (Asp-31) interacts with Zn(2+). Ca(2+)-binding residues include Thr-32, Glu-37, Asp-68, Asn-70, Asp-72, Gln-74, and Glu-79. His-92 and His-96 together coordinate Zn(2+). At His-107 the chain carries Pros-methylhistidine.

It belongs to the S-100 family. Homodimer. Preferentially exists as a heterodimer or heterotetramer with S100A8 known as calprotectin (S100A8/A9). S100A9 interacts with ATP2A2. S100A9 interacts with AGER, and with the heterodimeric complex formed by TLR4 and LY96 in the presence of calcium and/or zinc ions. S100A9 binds quinoline-3-carboxamides in the presence of calcium and/or zinc ions. S100A9 interacts with amyloid-beta protein 40. Calprotectin (S100A8/9) interacts with CEACAM3 and tubulin filaments in a calcium-dependent manner. Heterotetrameric calprotectin (S100A8/A9) interacts with ANXA6 and associates with tubulin filaments in activated monocytes. Calprotectin (S100A8/9) interacts with NCF2/P67PHOX, RAC1, RAC2, CYBA and CYBB. Calprotectin (S100A8/9) interacts with NOS2 to form the iNOS-S100A8/A9 transnitrosylase complex; induced by LDL(ox). Calprotectin (S100A8/9) interacts with CD69. Post-translationally, phosphorylated. Phosphorylation inhibits activation of tubulin polymerization. In terms of processing, methylation at His-107 by METTL9 reduces zinc-binding without affecting heterodimerization with S100A8.

The protein resides in the secreted. The protein localises to the cytoplasm. It is found in the cytoskeleton. Its subcellular location is the cell membrane. Functionally, S100A9 is a calcium- and zinc-binding protein which plays a prominent role in the regulation of inflammatory processes and immune response. It can induce neutrophil chemotaxis, adhesion, can increase the bactericidal activity of neutrophils by promoting phagocytosis via activation of SYK, PI3K/AKT, and ERK1/2 and can induce degranulation of neutrophils by a MAPK-dependent mechanism. Predominantly found as calprotectin (S100A8/A9) which has a wide plethora of intra- and extracellular functions. The intracellular functions include: facilitating leukocyte arachidonic acid trafficking and metabolism, modulation of the tubulin-dependent cytoskeleton during migration of phagocytes and activation of the neutrophilic NADPH-oxidase. Also participates in regulatory T-cell differentiation together with CD69. Activates NADPH-oxidase by facilitating the enzyme complex assembly at the cell membrane, transferring arachidonic acid, an essential cofactor, to the enzyme complex and S100A8 contributes to the enzyme assembly by directly binding to NCF2/P67PHOX. The extracellular functions involve pro-inflammatory, antimicrobial, oxidant-scavenging and apoptosis-inducing activities. Its pro-inflammatory activity includes recruitment of leukocytes, promotion of cytokine and chemokine production, and regulation of leukocyte adhesion and migration. Acts as an alarmin or a danger associated molecular pattern (DAMP) molecule and stimulates innate immune cells via binding to pattern recognition receptors such as Toll-like receptor 4 (TLR4) and receptor for advanced glycation endproducts (AGER). Binding to TLR4 and AGER activates the MAP-kinase and NF-kappa-B signaling pathways resulting in the amplification of the pro-inflammatory cascade. Has antimicrobial activity towards bacteria and fungi and exerts its antimicrobial activity probably via chelation of Zn(2+) which is essential for microbial growth. Can induce cell death via autophagy and apoptosis and this occurs through the cross-talk of mitochondria and lysosomes via reactive oxygen species (ROS) and the process involves BNIP3. Can regulate neutrophil number and apoptosis by an anti-apoptotic effect; regulates cell survival via ITGAM/ITGB and TLR4 and a signaling mechanism involving MEK-ERK. Its role as an oxidant scavenger has a protective role in preventing exaggerated tissue damage by scavenging oxidants. The iNOS-S100A8/A9 transnitrosylase complex is proposed to direct selective inflammatory stimulus-dependent S-nitrosylation of multiple targets such as GAPDH, NXA5, EZR, MSN and VIM by recognizing a [IL]-x-C-x-x-[DE] motif. In Mus musculus (Mouse), this protein is Protein S100-A9 (S100a9).